The chain runs to 414 residues: Serine hydroxymethyltransferase (414 aa).

(6S)-5,6,7,8-tetrahydrofolate contacts are provided by residues leucine 118 and 122 to 124 (GHL). Residue lysine 227 is modified to N6-(pyridoxal phosphate)lysine. Residues glutamate 240 and 350-352 (SPF) contribute to the (6S)-5,6,7,8-tetrahydrofolate site.

Belongs to the SHMT family. Homodimer. Requires pyridoxal 5'-phosphate as cofactor.

It localises to the cytoplasm. It carries out the reaction (6R)-5,10-methylene-5,6,7,8-tetrahydrofolate + glycine + H2O = (6S)-5,6,7,8-tetrahydrofolate + L-serine. Its pathway is one-carbon metabolism; tetrahydrofolate interconversion. It participates in amino-acid biosynthesis; glycine biosynthesis; glycine from L-serine: step 1/1. Catalyzes the reversible interconversion of serine and glycine with tetrahydrofolate (THF) serving as the one-carbon carrier. This reaction serves as the major source of one-carbon groups required for the biosynthesis of purines, thymidylate, methionine, and other important biomolecules. Also exhibits THF-independent aldolase activity toward beta-hydroxyamino acids, producing glycine and aldehydes, via a retro-aldol mechanism. This Bacillus cereus (strain ZK / E33L) protein is Serine hydroxymethyltransferase.